Consider the following 192-residue polypeptide: Ion-translocating oxidoreductase complex subunit B (192 aa).

Positions 1-26 (MEMIVIAVVALTLLALLFGMLLGYAS) are hydrophobic. In terms of domain architecture, 4Fe-4S spans 32 to 91 (EEDPVVDQVDELLPQSQCGQCGYPGCRPYAEAVANNGEQINRCVPGGEPVMQKIATLLNV). The [4Fe-4S] cluster site is built by C49, C52, C57, C74, C117, C120, C123, C127, C147, C150, C153, and C157. 4Fe-4S ferredoxin-type domains follow at residues 108-137 (MLAVIDEPNCIGCTKCIQACPVDAIVGATR) and 138-167 (AMHTVMSDLCTGCNLCVDPCPTQCIELRPA).

It belongs to the 4Fe4S bacterial-type ferredoxin family. RnfB subfamily. As to quaternary structure, the complex is composed of six subunits: RnfA, RnfB, RnfC, RnfD, RnfE and RnfG. Requires [4Fe-4S] cluster as cofactor.

The protein resides in the cell inner membrane. In terms of biological role, part of a membrane-bound complex that couples electron transfer with translocation of ions across the membrane. The sequence is that of Ion-translocating oxidoreductase complex subunit B from Cronobacter sakazakii (strain ATCC BAA-894) (Enterobacter sakazakii).